We begin with the raw amino-acid sequence, 542 residues long: Glutamyl-tRNA(Gln) amidotransferase subunit A, mitochondrial (542 aa).

Residues K55 and S143 each act as charge relay system in the active site. The active-site Acyl-ester intermediate is the S167.

The protein belongs to the amidase family. GatA subfamily. In terms of assembly, subunit of the heterotrimeric GatCAB amidotransferase (AdT) complex, composed of A, B and C subunits.

It is found in the mitochondrion. The enzyme catalyses L-glutamyl-tRNA(Gln) + L-glutamine + ATP + H2O = L-glutaminyl-tRNA(Gln) + L-glutamate + ADP + phosphate + H(+). In terms of biological role, allows the formation of correctly charged Gln-tRNA(Gln) through the transamidation of misacylated Glu-tRNA(Gln) in the mitochondria. The reaction takes place in the presence of glutamine and ATP through an activated gamma-phospho-Glu-tRNA(Gln). In Neurospora crassa (strain ATCC 24698 / 74-OR23-1A / CBS 708.71 / DSM 1257 / FGSC 987), this protein is Glutamyl-tRNA(Gln) amidotransferase subunit A, mitochondrial.